Here is a 334-residue protein sequence, read N- to C-terminus: Eukaryotic translation initiation factor 3 subunit H (334 aa).

The 133-residue stretch at 20–152 (VQCDGLAAMK…LKAYRLTPQA (133 aa)) folds into the MPN domain.

It belongs to the eIF-3 subunit H family. In terms of assembly, component of the eukaryotic translation initiation factor 3 (eIF-3) complex.

It localises to the cytoplasm. Its function is as follows. Component of the eukaryotic translation initiation factor 3 (eIF-3) complex, which is involved in protein synthesis of a specialized repertoire of mRNAs and, together with other initiation factors, stimulates binding of mRNA and methionyl-tRNAi to the 40S ribosome. The eIF-3 complex specifically targets and initiates translation of a subset of mRNAs involved in cell proliferation. This chain is Eukaryotic translation initiation factor 3 subunit H, found in Anopheles gambiae (African malaria mosquito).